A 232-amino-acid chain; its full sequence is Ornithine carbamoyltransferase (232 aa).

Carbamoyl phosphate is bound by residues glutamine 15, arginine 39, and 66–69 (HPTQ). L-ornithine-binding positions include asparagine 99, aspartate 163, and 167 to 168 (SM). Residues 204–207 (HCLP) and threonine 232 each bind carbamoyl phosphate.

The protein belongs to the aspartate/ornithine carbamoyltransferase superfamily. OTCase family.

The protein localises to the cytoplasm. It catalyses the reaction carbamoyl phosphate + L-ornithine = L-citrulline + phosphate + H(+). Its pathway is amino-acid biosynthesis; L-arginine biosynthesis; L-arginine from L-ornithine and carbamoyl phosphate: step 1/3. This Neisseria animalis protein is Ornithine carbamoyltransferase (argF).